Here is a 207-residue protein sequence, read N- to C-terminus: Large ribosomal subunit protein uL4 (207 aa).

Positions 58 to 85 are disordered; sequence AGSGKKPFKQKGTGQARQGCRRAPQYPG.

Belongs to the universal ribosomal protein uL4 family. In terms of assembly, part of the 50S ribosomal subunit.

Functionally, one of the primary rRNA binding proteins, this protein initially binds near the 5'-end of the 23S rRNA. It is important during the early stages of 50S assembly. It makes multiple contacts with different domains of the 23S rRNA in the assembled 50S subunit and ribosome. In terms of biological role, forms part of the polypeptide exit tunnel. This is Large ribosomal subunit protein uL4 from Geotalea uraniireducens (strain Rf4) (Geobacter uraniireducens).